We begin with the raw amino-acid sequence, 691 residues long: Beta-galactosidase III (691 aa).

Residues R121 and N159 each coordinate substrate. E160 serves as the catalytic Proton donor. The Nucleophile role is filled by E318. Substrate is bound by residues W326 and 366–369 (EKWH).

This sequence belongs to the glycosyl hydrolase 42 family.

It catalyses the reaction Hydrolysis of terminal non-reducing beta-D-galactose residues in beta-D-galactosides.. Specific for beta-D-anomer-linked galactoside substrates. Hydrolyzes o-nitrophenyl-beta-D-galactopyranoside (ONPG), chromogen 5-bromo-4-chloro-3-indolyl-beta-D-galactopyranoside (X-gal) and to a lesser extent lactose. Hydrolyzes p-nitrophenyl-beta-D-galacturonide very slightly. Does not hydrolyze maltose, sucrose, raffinose or melibiose. Has some transgalactosylation activity yielding galacto-oligosaccharides (GaOS), including O-beta-D-galactopyranosyl-(1,3)-O-beta-D-galactopyranosyl-(1-4)-D-glucopyranose. The sequence is that of Beta-galactosidase III from Bifidobacterium longum subsp. infantis.